Reading from the N-terminus, the 460-residue chain is Kynurenine 3-monooxygenase (460 aa).

Belongs to the aromatic-ring hydroxylase family. KMO subfamily. Requires FAD as cofactor.

The protein resides in the mitochondrion. It carries out the reaction L-kynurenine + NADPH + O2 + H(+) = 3-hydroxy-L-kynurenine + NADP(+) + H2O. It participates in cofactor biosynthesis; NAD(+) biosynthesis; quinolinate from L-kynurenine: step 1/3. Functionally, catalyzes the hydroxylation of L-kynurenine (L-Kyn) to form 3-hydroxy-L-kynurenine (L-3OHKyn). Required for synthesis of quinolinic acid. This chain is Kynurenine 3-monooxygenase, found in Dictyostelium discoideum (Social amoeba).